We begin with the raw amino-acid sequence, 175 residues long: Thioredoxin M3, chloroplastic (175 aa).

Residues 1-59 (MAATATACPAPPPPRSLYRGVALAAPGRRRAGYGASSSAARRWPGCRRRWAAHRIRTVS) constitute a chloroplast transit peptide. The Thioredoxin domain occupies 61 to 171 (AYSPRGAKTI…YVRAIEKSIS (111 aa)). Catalysis depends on nucleophile residues cysteine 95 and cysteine 98. An intrachain disulfide couples cysteine 95 to cysteine 98.

It belongs to the thioredoxin family. Plant M-type subfamily.

It is found in the plastid. Its subcellular location is the chloroplast. Probable thiol-disulfide oxidoreductase that may be involved in the redox regulation of chloroplastic enzymes. In Oryza sativa subsp. japonica (Rice), this protein is Thioredoxin M3, chloroplastic.